Here is a 558-residue protein sequence, read N- to C-terminus: DNA ligase B (558 aa).

The active-site N6-AMP-lysine intermediate is the Lys-126.

Belongs to the NAD-dependent DNA ligase family. LigB subfamily.

It carries out the reaction NAD(+) + (deoxyribonucleotide)n-3'-hydroxyl + 5'-phospho-(deoxyribonucleotide)m = (deoxyribonucleotide)n+m + AMP + beta-nicotinamide D-nucleotide.. Its function is as follows. Catalyzes the formation of phosphodiester linkages between 5'-phosphoryl and 3'-hydroxyl groups in double-stranded DNA using NAD as a coenzyme and as the energy source for the reaction. This Pseudomonas fluorescens (strain Pf0-1) protein is DNA ligase B.